A 432-amino-acid chain; its full sequence is Glutamyl-tRNA reductase (432 aa).

Substrate-binding positions include 55–58 (TCNR), serine 114, 119–121 (ETQ), and glutamine 125. Cysteine 56 (nucleophile) is an active-site residue. 194-199 (GAGEMI) provides a ligand contact to NADP(+).

The protein belongs to the glutamyl-tRNA reductase family. Homodimer.

The catalysed reaction is (S)-4-amino-5-oxopentanoate + tRNA(Glu) + NADP(+) = L-glutamyl-tRNA(Glu) + NADPH + H(+). It functions in the pathway porphyrin-containing compound metabolism; protoporphyrin-IX biosynthesis; 5-aminolevulinate from L-glutamyl-tRNA(Glu): step 1/2. Functionally, catalyzes the NADPH-dependent reduction of glutamyl-tRNA(Glu) to glutamate 1-semialdehyde (GSA). This chain is Glutamyl-tRNA reductase, found in Burkholderia cenocepacia (strain ATCC BAA-245 / DSM 16553 / LMG 16656 / NCTC 13227 / J2315 / CF5610) (Burkholderia cepacia (strain J2315)).